The chain runs to 549 residues: CTP synthase (549 aa).

Residues 1–270 (MTKFVFVTGG…DRLICEELRL (270 aa)) form an amidoligase domain region. S13 lines the CTP pocket. S13 serves as a coordination point for UTP. Residues 14–19 (SLGKGI) and D71 contribute to the ATP site. Mg(2+) contacts are provided by D71 and E144. Residues 151–153 (DIE), 191–196 (KTKPTQ), and K227 contribute to the CTP site. Residues 191 to 196 (KTKPTQ) and K227 contribute to the UTP site. In terms of domain architecture, Glutamine amidotransferase type-1 spans 295-547 (TIGMVGKYVD…VEAALAAQRQ (253 aa)). Position 356 (G356) interacts with L-glutamine. C383 acts as the Nucleophile; for glutamine hydrolysis in catalysis. L-glutamine-binding positions include 384–387 (LGMQ), E407, and R473. Active-site residues include H520 and E522.

This sequence belongs to the CTP synthase family. Homotetramer.

The catalysed reaction is UTP + L-glutamine + ATP + H2O = CTP + L-glutamate + ADP + phosphate + 2 H(+). It carries out the reaction L-glutamine + H2O = L-glutamate + NH4(+). The enzyme catalyses UTP + NH4(+) + ATP = CTP + ADP + phosphate + 2 H(+). The protein operates within pyrimidine metabolism; CTP biosynthesis via de novo pathway; CTP from UDP: step 2/2. Allosterically activated by GTP, when glutamine is the substrate; GTP has no effect on the reaction when ammonia is the substrate. The allosteric effector GTP functions by stabilizing the protein conformation that binds the tetrahedral intermediate(s) formed during glutamine hydrolysis. Inhibited by the product CTP, via allosteric rather than competitive inhibition. Catalyzes the ATP-dependent amination of UTP to CTP with either L-glutamine or ammonia as the source of nitrogen. Regulates intracellular CTP levels through interactions with the four ribonucleotide triphosphates. This chain is CTP synthase, found in Cupriavidus metallidurans (strain ATCC 43123 / DSM 2839 / NBRC 102507 / CH34) (Ralstonia metallidurans).